Consider the following 56-residue polypeptide: uncharacterized protein (56 aa).

The helical transmembrane segment at 30-52 threads the bilayer; the sequence is IKIGIICVIITWAIFSINHHHTI.

It localises to the membrane. This is an uncharacterized protein from Dictyostelium discoideum (Social amoeba).